Consider the following 581-residue polypeptide: Prolactin receptor (581 aa).

The N-terminal stretch at 1 to 24 (MKENVASRAVFILLLFLNASLLNG) is a signal peptide. Topologically, residues 25–234 (QSPPGKPKII…QIPNDFPVND (210 aa)) are extracellular. 2 Fibronectin type-III domains span residues 27–127 (PPGK…IVEP) and 129–229 (PPAN…IPND). The cysteines at positions 36 and 46 are disulfide-linked. A glycan (N-linked (GlcNAc...) asparagine) is linked at asparagine 59. Cysteine 75 and cysteine 86 form a disulfide bridge. A glycan (N-linked (GlcNAc...) asparagine) is linked at asparagine 132. 2 residues coordinate Zn(2+): aspartate 211 and histidine 212. Positions 215 to 219 (WSEWS) match the WSXWS motif motif. Asparagine 233 carries an N-linked (GlcNAc...) asparagine glycan. Residues 235-258 (TTVWIFVAVLSAVICLIMVWAVAL) form a helical membrane-spanning segment. The Cytoplasmic segment spans residues 259 to 581 (KGYSMMTCIL…PAKEAPPALP (323 aa)). The short motif at 267 to 275 (ILPPVPGPK) is the Box 1 motif element. Disordered regions lie at residues 321-362 (EDQQ…LFSE) and 462-502 (LKPS…QDKT). A compositionally biased stretch (basic and acidic residues) spans 329 to 349 (PSKEHMEQGVKPMHMDPDSDS).

It belongs to the type I cytokine receptor family. Type 1 subfamily. Interacts with SMARCA1. Interacts with NEK3 and VAV2 and this interaction is prolactin-dependent.

It is found in the membrane. Its function is as follows. This is a receptor for the anterior pituitary hormone prolactin. This chain is Prolactin receptor (PRLR), found in Cervus elaphus (Red deer).